The chain runs to 598 residues: Elongation factor 4 (598 aa).

Residues 2–183 (KKIRNFCIIA…AIIEKIPPPK (182 aa)) enclose the tr-type G domain. GTP-binding positions include 14-19 (DHGKST) and 130-133 (NKVD).

This sequence belongs to the TRAFAC class translation factor GTPase superfamily. Classic translation factor GTPase family. LepA subfamily.

Its subcellular location is the cell inner membrane. It carries out the reaction GTP + H2O = GDP + phosphate + H(+). Its function is as follows. Required for accurate and efficient protein synthesis under certain stress conditions. May act as a fidelity factor of the translation reaction, by catalyzing a one-codon backward translocation of tRNAs on improperly translocated ribosomes. Back-translocation proceeds from a post-translocation (POST) complex to a pre-translocation (PRE) complex, thus giving elongation factor G a second chance to translocate the tRNAs correctly. Binds to ribosomes in a GTP-dependent manner. This is Elongation factor 4 from Flavobacterium johnsoniae (strain ATCC 17061 / DSM 2064 / JCM 8514 / BCRC 14874 / CCUG 350202 / NBRC 14942 / NCIMB 11054 / UW101) (Cytophaga johnsonae).